The chain runs to 155 residues: Large ribosomal subunit protein uL22c (155 aa).

This sequence belongs to the universal ribosomal protein uL22 family. Part of the 50S ribosomal subunit.

Its subcellular location is the plastid. The protein localises to the chloroplast. This protein binds specifically to 23S rRNA. Its function is as follows. The globular domain of the protein is located near the polypeptide exit tunnel on the outside of the subunit, while an extended beta-hairpin is found that lines the wall of the exit tunnel in the center of the 70S ribosome. This is Large ribosomal subunit protein uL22c (rpl22) from Nicotiana tomentosiformis (Tobacco).